Consider the following 338-residue polypeptide: Fructose-1,6-bisphosphatase class 1 (338 aa).

Residues glutamate 94, aspartate 116, leucine 118, and aspartate 119 each coordinate Mg(2+). Substrate is bound by residues 119–122 (DGSS), asparagine 210, and lysine 276. Residue glutamate 282 participates in Mg(2+) binding.

This sequence belongs to the FBPase class 1 family. As to quaternary structure, homotetramer. The cofactor is Mg(2+).

Its subcellular location is the cytoplasm. The enzyme catalyses beta-D-fructose 1,6-bisphosphate + H2O = beta-D-fructose 6-phosphate + phosphate. It functions in the pathway carbohydrate biosynthesis; gluconeogenesis. The sequence is that of Fructose-1,6-bisphosphatase class 1 from Burkholderia mallei (strain NCTC 10247).